Here is a 411-residue protein sequence, read N- to C-terminus: S-adenosylmethionine synthase (411 aa).

An ATP-binding site is contributed by His-15. A Mg(2+)-binding site is contributed by Asp-17. Glu-43 is a binding site for K(+). 2 residues coordinate L-methionine: Glu-56 and Gln-100. Positions 100-110 (QSPDIAQGVNE) are flexible loop. ATP contacts are provided by residues 171 to 173 (DGK), 248 to 249 (KF), Asp-257, 263 to 264 (RK), Ala-280, and Lys-284. Asp-257 lines the L-methionine pocket. Lys-288 contributes to the L-methionine binding site.

This sequence belongs to the AdoMet synthase family. As to quaternary structure, homotetramer; dimer of dimers. Requires Mg(2+) as cofactor. It depends on K(+) as a cofactor.

The protein resides in the cytoplasm. The enzyme catalyses L-methionine + ATP + H2O = S-adenosyl-L-methionine + phosphate + diphosphate. Its pathway is amino-acid biosynthesis; S-adenosyl-L-methionine biosynthesis; S-adenosyl-L-methionine from L-methionine: step 1/1. Functionally, catalyzes the formation of S-adenosylmethionine (AdoMet) from methionine and ATP. The overall synthetic reaction is composed of two sequential steps, AdoMet formation and the subsequent tripolyphosphate hydrolysis which occurs prior to release of AdoMet from the enzyme. This chain is S-adenosylmethionine synthase, found in Synechococcus sp. (strain CC9605).